The primary structure comprises 145 residues: Glutaconyl-CoA decarboxylase subunit gamma (145 aa).

A disordered region spans residues alanine 52–alanine 82. Low complexity predominate over residues alanine 57 to alanine 75. One can recognise a Biotinyl-binding domain in the interval serine 77–leucine 145. The residue at position 112 (lysine 112) is an N6-biotinyllysine.

As to quaternary structure, heterooctamer consisting of two alpha, two beta, two gamma and two delta subunits. It depends on biotin as a cofactor.

It carries out the reaction (2E)-glutaconyl-CoA + Na(+)(in) + H(+) = (2E)-butenoyl-CoA + Na(+)(out) + CO2. It participates in amino-acid degradation; L-glutamate degradation via hydroxyglutarate pathway; crotonoyl-CoA from L-glutamate: step 5/5. In terms of biological role, biotin carrier subunit of the primary sodium pump glutaconyl-CoA decarboxylase (GCD). The chain is Glutaconyl-CoA decarboxylase subunit gamma (gcdC) from Acidaminococcus fermentans (strain ATCC 25085 / DSM 20731 / CCUG 9996 / CIP 106432 / VR4).